The chain runs to 141 residues: ATP synthase epsilon chain (141 aa).

Belongs to the ATPase epsilon chain family. F-type ATPases have 2 components, CF(1) - the catalytic core - and CF(0) - the membrane proton channel. CF(1) has five subunits: alpha(3), beta(3), gamma(1), delta(1), epsilon(1). CF(0) has three main subunits: a, b and c.

The protein resides in the cell inner membrane. Its function is as follows. Produces ATP from ADP in the presence of a proton gradient across the membrane. The chain is ATP synthase epsilon chain from Azoarcus sp. (strain BH72).